Consider the following 382-residue polypeptide: Biotin synthase (382 aa).

The 236-residue stretch at 83-318 (CCGNVVDLCS…EQILRYAGGR (236 aa)) folds into the Radical SAM core domain. Cys-101, Cys-105, and Cys-108 together coordinate [4Fe-4S] cluster. The [2Fe-2S] cluster site is built by Cys-146, Cys-183, Cys-243, and Arg-313.

The protein belongs to the radical SAM superfamily. Biotin synthase family. In terms of assembly, homodimer. [4Fe-4S] cluster serves as cofactor. It depends on [2Fe-2S] cluster as a cofactor.

The enzyme catalyses (4R,5S)-dethiobiotin + (sulfur carrier)-SH + 2 reduced [2Fe-2S]-[ferredoxin] + 2 S-adenosyl-L-methionine = (sulfur carrier)-H + biotin + 2 5'-deoxyadenosine + 2 L-methionine + 2 oxidized [2Fe-2S]-[ferredoxin]. It functions in the pathway cofactor biosynthesis; biotin biosynthesis; biotin from 7,8-diaminononanoate: step 2/2. In terms of biological role, catalyzes the conversion of dethiobiotin (DTB) to biotin by the insertion of a sulfur atom into dethiobiotin via a radical-based mechanism. The protein is Biotin synthase of Crocosphaera subtropica (strain ATCC 51142 / BH68) (Cyanothece sp. (strain ATCC 51142)).